A 589-amino-acid polypeptide reads, in one-letter code: Multidrug transporter FLR2 (589 aa).

A disordered region spans residues 50–116 (KEEMKQDNQT…SSTKDASKPE (67 aa)). Positions 56–73 (DNQTSTDSMSTSTQQETD) are enriched in low complexity. Residue Asn-57 is glycosylated (N-linked (GlcNAc...) asparagine). Residues 107-116 (SSTKDASKPE) are compositionally biased toward basic and acidic residues. Asn-136 carries N-linked (GlcNAc...) asparagine glycosylation. The next 12 membrane-spanning stretches (helical) occupy residues 143–163 (TFVI…SSIY), 179–199 (VVGT…PIIF), 211–231 (MPLY…CALV), 234–254 (IAGL…VLAT), 275–295 (WAVG…AMVV), 301–321 (WIFW…IFFF), 378–398 (PIIL…YLFF), 417–437 (GLAF…LIIF), 455–475 (LFLI…FFFG), 480–500 (IHWI…FNLF), 516–536 (ASVF…FPLF), and 551–571 (VAWG…IPFV).

It belongs to the major facilitator superfamily.

It is found in the cell membrane. Its function is as follows. Multidrug transporter that confers resistance to 5-flucytosine (5-FC) and clotrimazole. Further confers azole drug resistance. Plays direct roles in extrusion of 5-flucytosine and clotrimazole. The chain is Multidrug transporter FLR2 from Candida glabrata (strain ATCC 2001 / BCRC 20586 / JCM 3761 / NBRC 0622 / NRRL Y-65 / CBS 138) (Yeast).